The primary structure comprises 431 residues: Enolase (431 aa).

Gln163 is a binding site for (2R)-2-phosphoglycerate. Glu205 serves as the catalytic Proton donor. Residues Asp242, Glu283, and Asp310 each contribute to the Mg(2+) site. Positions 335, 364, 365, and 386 each coordinate (2R)-2-phosphoglycerate. Lys335 (proton acceptor) is an active-site residue.

Belongs to the enolase family. The cofactor is Mg(2+).

It is found in the cytoplasm. The protein resides in the secreted. It localises to the cell surface. The enzyme catalyses (2R)-2-phosphoglycerate = phosphoenolpyruvate + H2O. Its pathway is carbohydrate degradation; glycolysis; pyruvate from D-glyceraldehyde 3-phosphate: step 4/5. Functionally, catalyzes the reversible conversion of 2-phosphoglycerate (2-PG) into phosphoenolpyruvate (PEP). It is essential for the degradation of carbohydrates via glycolysis. The protein is Enolase of Kineococcus radiotolerans (strain ATCC BAA-149 / DSM 14245 / SRS30216).